Consider the following 416-residue polypeptide: Subtilisin-like protease 12 (416 aa).

The signal sequence occupies residues 1–19 (MSILKMMLIYFAIFWVVNA). The propeptide occupies 20 to 116 (AQLLDIDSQG…VEPNKEMQVA (97 aa)). The region spanning 35-115 (YIVVMKDRVS…FVEPNKEMQV (81 aa)) is the Inhibitor I9 domain. Residues N123, N136, and N150 are each glycosylated (N-linked (GlcNAc...) asparagine). The 292-residue stretch at 125–416 (TWGLSRISHK…NKLLYNGSGA (292 aa)) folds into the Peptidase S8 domain. Residues D157 and H188 each act as charge relay system in the active site. N-linked (GlcNAc...) asparagine glycosylation is found at N249, N305, N334, and N353. S362 functions as the Charge relay system in the catalytic mechanism. N404 and N412 each carry an N-linked (GlcNAc...) asparagine glycan.

It belongs to the peptidase S8 family.

Its subcellular location is the secreted. Functionally, secreted subtilisin-like serine protease with keratinolytic activity that contributes to pathogenicity. The polypeptide is Subtilisin-like protease 12 (SUB12) (Arthroderma benhamiae (strain ATCC MYA-4681 / CBS 112371) (Trichophyton mentagrophytes)).